A 206-amino-acid chain; its full sequence is Transcription factor BTF3 (206 aa).

Residues 1–42 (MRRTGAPAQADSRGRGRARGGCPGGEATLSQPPPRGGTRGQE) form a disordered region. An Omega-N-methylarginine modification is found at arginine 19. Residue serine 30 is modified to Phosphoserine. 2 positions are modified to N6-methyllysine: lysine 46 and lysine 54. The NAC-A/B domain occupies 82-147 (TADDKKLQFS…AETKQLTEML (66 aa)). Threonine 160 carries the phosphothreonine modification. The tract at residues 170–206 (PKQSVDGKAPLATGEDDDDEVPDLVENFDEASKNEAN) is disordered. A Phosphoserine modification is found at serine 173. Residues 183-198 (GEDDDDEVPDLVENFD) show a composition bias toward acidic residues.

It belongs to the NAC-beta family. Part of the nascent polypeptide-associated complex (NAC), which is a heterodimer of NACA and BTF3 (via NAC-A/B domains). NAC associates with ribosomes through the BTF3/NACB subunit. Both subunits can contact nascent polypeptide chains.

It localises to the cytoplasm. It is found in the nucleus. In terms of biological role, when associated with NACA, prevents inappropriate targeting of non-secretory polypeptides to the endoplasmic reticulum (ER). Binds to nascent polypeptide chains as they emerge from the ribosome and blocks their interaction with the signal recognition particle (SRP), which normally targets nascent secretory peptides to the ER. BTF3 is also a general transcription factor that can form a stable complex with RNA polymerase II. Required for the initiation of transcription. In Homo sapiens (Human), this protein is Transcription factor BTF3 (BTF3).